Consider the following 107-residue polypeptide: Alpha-elapitoxin-Al2a (107 aa).

The N-terminal stretch at 1 to 21 (MKTLLLTLVVVTIVCLDLGDS) is a signal peptide. Cystine bridges form between cysteine 24–cysteine 41, cysteine 34–cysteine 62, cysteine 47–cysteine 51, cysteine 66–cysteine 77, and cysteine 78–cysteine 83.

The protein belongs to the three-finger toxin family. Long-chain subfamily. Type II alpha-neurotoxin sub-subfamily. As to expression, expressed by the venom gland.

Its subcellular location is the secreted. Its function is as follows. Binds with high affinity to muscular (alpha-1/CHRNA1) and neuronal (alpha-7/CHRNA7) nicotinic acetylcholine receptor (nAChR) and inhibits acetylcholine from binding to the receptor, thereby impairing neuromuscular and neuronal transmission. This is Alpha-elapitoxin-Al2a from Austrelaps labialis (Pygmy copperhead).